We begin with the raw amino-acid sequence, 198 residues long: Pyridoxal 5'-phosphate synthase subunit PdxT (198 aa).

52 to 54 (GES) serves as a coordination point for L-glutamine. Cysteine 84 functions as the Nucleophile in the catalytic mechanism. L-glutamine-binding positions include arginine 115 and 142 to 143 (IR). Catalysis depends on charge relay system residues histidine 178 and glutamate 180.

This sequence belongs to the glutaminase PdxT/SNO family. In the presence of PdxS, forms a dodecamer of heterodimers. Only shows activity in the heterodimer.

The catalysed reaction is aldehydo-D-ribose 5-phosphate + D-glyceraldehyde 3-phosphate + L-glutamine = pyridoxal 5'-phosphate + L-glutamate + phosphate + 3 H2O + H(+). The enzyme catalyses L-glutamine + H2O = L-glutamate + NH4(+). Its pathway is cofactor biosynthesis; pyridoxal 5'-phosphate biosynthesis. Catalyzes the hydrolysis of glutamine to glutamate and ammonia as part of the biosynthesis of pyridoxal 5'-phosphate. The resulting ammonia molecule is channeled to the active site of PdxS. This chain is Pyridoxal 5'-phosphate synthase subunit PdxT, found in Archaeoglobus fulgidus (strain ATCC 49558 / DSM 4304 / JCM 9628 / NBRC 100126 / VC-16).